The following is a 107-amino-acid chain: Glutaredoxin 4 (107 aa).

The region spanning 4–106 (LDKIKKQISE…TLLAEVAAKH (103 aa)) is the Glutaredoxin domain. Residue Lys-21 coordinates glutathione. Cys-29 provides a ligand contact to [2Fe-2S] cluster. Residues Arg-58, Phe-70, and 83 to 84 (CD) each bind glutathione.

Belongs to the glutaredoxin family. Monothiol subfamily. Homodimer.

It localises to the cytoplasm. In terms of biological role, monothiol glutaredoxin involved in the biogenesis of iron-sulfur clusters. The protein is Glutaredoxin 4 (grxD) of Haemophilus influenzae (strain ATCC 51907 / DSM 11121 / KW20 / Rd).